A 399-amino-acid chain; its full sequence is UDP-galactopyranose mutase (399 aa).

Residues Ser25, 44-45 (EK), Asn52, and 71-72 (HI) each bind FAD. Positions 171, 175, 200, 297, 306, and 345 each coordinate UDP-alpha-D-galactose. Position 374 (Arg374) interacts with FAD. Tyr380 provides a ligand contact to UDP-alpha-D-galactose. FAD is bound at residue 381-386 (IDMDRA).

It belongs to the UDP-galactopyranose/dTDP-fucopyranose mutase family. FAD is required as a cofactor.

It carries out the reaction UDP-alpha-D-galactose = UDP-alpha-D-galactofuranose. Its function is as follows. Involved in the conversion of UDP-GalP into UDP-GalF through a 2-keto intermediate. This chain is UDP-galactopyranose mutase (glf), found in Mycoplasma pneumoniae (strain ATCC 29342 / M129 / Subtype 1) (Mycoplasmoides pneumoniae).